The following is a 540-amino-acid chain: Chaperonin GroEL 2 (540 aa).

ATP contacts are provided by residues 30–33 (TLGP), Lys51, 87–91 (DGTTT), Gly415, 479–481 (NAA), and Asp495.

Belongs to the chaperonin (HSP60) family. In terms of assembly, forms a cylinder of 14 subunits composed of two heptameric rings stacked back-to-back. Interacts with the co-chaperonin GroES.

The protein localises to the cytoplasm. The catalysed reaction is ATP + H2O + a folded polypeptide = ADP + phosphate + an unfolded polypeptide.. Its function is as follows. Together with its co-chaperonin GroES, plays an essential role in assisting protein folding. The GroEL-GroES system forms a nano-cage that allows encapsulation of the non-native substrate proteins and provides a physical environment optimized to promote and accelerate protein folding. The chain is Chaperonin GroEL 2 from Burkholderia vietnamiensis (strain G4 / LMG 22486) (Burkholderia cepacia (strain R1808)).